The sequence spans 519 residues: Protein nucleotidyltransferase YdiU (519 aa).

ATP is bound by residues G101, G103, R104, K124, D136, G137, R194, and R201. The Proton acceptor role is filled by D271. Mg(2+)-binding residues include N272 and D281. D281 is an ATP binding site.

The protein belongs to the SELO family. Mg(2+) is required as a cofactor. Requires Mn(2+) as cofactor.

It catalyses the reaction L-seryl-[protein] + ATP = 3-O-(5'-adenylyl)-L-seryl-[protein] + diphosphate. The enzyme catalyses L-threonyl-[protein] + ATP = 3-O-(5'-adenylyl)-L-threonyl-[protein] + diphosphate. It carries out the reaction L-tyrosyl-[protein] + ATP = O-(5'-adenylyl)-L-tyrosyl-[protein] + diphosphate. The catalysed reaction is L-histidyl-[protein] + UTP = N(tele)-(5'-uridylyl)-L-histidyl-[protein] + diphosphate. It catalyses the reaction L-seryl-[protein] + UTP = O-(5'-uridylyl)-L-seryl-[protein] + diphosphate. The enzyme catalyses L-tyrosyl-[protein] + UTP = O-(5'-uridylyl)-L-tyrosyl-[protein] + diphosphate. Nucleotidyltransferase involved in the post-translational modification of proteins. It can catalyze the addition of adenosine monophosphate (AMP) or uridine monophosphate (UMP) to a protein, resulting in modifications known as AMPylation and UMPylation. This chain is Protein nucleotidyltransferase YdiU, found in Azoarcus sp. (strain BH72).